Reading from the N-terminus, the 562-residue chain is MQFDYIIIGAGSAGNVLATRLTEDPNTTVLLLEAGGPDYRFDFRTQMPAALAFPLQGKRYNWAYETEPEPFMNNRRMECGRGKGLGGSSLINGMCYIRGNALDLDNWAQEPGLENWSYLDCLPYYRKAETRDVGENDYHGGDGPVSVTTSKPGVNPLFEAMIEAGVQAGYPRTDDLNGYQQEGFGPMDRTVTPHGRRASTARGYLDQAKSRSNLTIRTHAMTDHIIFDGKRAVGVEWLEGDSTIPTRAAANKEVLLCAGAIASPQILQRSGVGNAGLLAEFDIPLVHELPGVGENLQDHLEMYLQYECKEPVSLYPALQWWNQPKIGAEWLFGGTGIGASNHFEAGGFIRSREEFAWPNIQYHFLPVAINYNGSNAVKEHGFQCHVGSMRSPSRGHVRIKSRAPHQHPAILFNYMSHEQDWQEFRDAIRITREIMHQPALDQYHGREISPGVECQTDEQLDEFVRNHAETAFHPCGTCKMGYDEMSVVDGEGRVHGLEGLRVVDASIMPQIITGNLNATTIMIGEKMADMIRGKDALPRSTAGYYVANGMPVRAKKMSRDVN.

4-33 contacts FAD; sequence DYIIIGAGSAGNVLATRLTEDPNTTVLLLE. H473 acts as the Proton acceptor in catalysis.

Belongs to the GMC oxidoreductase family. Requires FAD as cofactor.

The enzyme catalyses choline + A = betaine aldehyde + AH2. It carries out the reaction betaine aldehyde + NAD(+) + H2O = glycine betaine + NADH + 2 H(+). It participates in amine and polyamine biosynthesis; betaine biosynthesis via choline pathway; betaine aldehyde from choline (cytochrome c reductase route): step 1/1. Functionally, involved in the biosynthesis of the osmoprotectant glycine betaine. Catalyzes the oxidation of choline to betaine aldehyde and betaine aldehyde to glycine betaine at the same rate. This chain is Oxygen-dependent choline dehydrogenase, found in Escherichia coli (strain SMS-3-5 / SECEC).